Consider the following 652-residue polypeptide: Acetyl-coenzyme A synthetase (652 aa).

CoA is bound by residues 189-192 and threonine 311; that span reads RGGK. ATP contacts are provided by residues 387–389, 411–416, aspartate 500, and arginine 515; these read GEP and DTWWQT. A CoA-binding site is contributed by serine 523. ATP is bound at residue arginine 526. Mg(2+) is bound by residues valine 537, histidine 539, and valine 542. Arginine 584 serves as a coordination point for CoA. Position 609 is an N6-acetyllysine (lysine 609).

This sequence belongs to the ATP-dependent AMP-binding enzyme family. The cofactor is Mg(2+). Post-translationally, acetylated. Deacetylation by the SIR2-homolog deacetylase activates the enzyme.

It catalyses the reaction acetate + ATP + CoA = acetyl-CoA + AMP + diphosphate. Its function is as follows. Catalyzes the conversion of acetate into acetyl-CoA (AcCoA), an essential intermediate at the junction of anabolic and catabolic pathways. AcsA undergoes a two-step reaction. In the first half reaction, AcsA combines acetate with ATP to form acetyl-adenylate (AcAMP) intermediate. In the second half reaction, it can then transfer the acetyl group from AcAMP to the sulfhydryl group of CoA, forming the product AcCoA. The chain is Acetyl-coenzyme A synthetase from Rhizobium rhizogenes (Agrobacterium rhizogenes).